A 230-amino-acid polypeptide reads, in one-letter code: Flagellar L-ring protein (230 aa).

A signal peptide spans 1–22 (MSPLSNFARTALACAVAALLGG). A lipid anchor (N-palmitoyl cysteine) is attached at cysteine 23. Cysteine 23 carries S-diacylglycerol cysteine lipidation.

It belongs to the FlgH family. The basal body constitutes a major portion of the flagellar organelle and consists of four rings (L,P,S, and M) mounted on a central rod.

The protein resides in the cell outer membrane. The protein localises to the bacterial flagellum basal body. Assembles around the rod to form the L-ring and probably protects the motor/basal body from shearing forces during rotation. The polypeptide is Flagellar L-ring protein (Stenotrophomonas maltophilia (strain R551-3)).